Consider the following 390-residue polypeptide: MKFVDEASILVVAGDGGNGCVSFRREKYIPKGGPDGGDGGDGGDVWMEADENLNTLIDYRFEKSFRAERGQNGASRDCTGKRGKDVTIKVPVGTRVIDQGTGETMGDMTKHGQRLLVAKGGWHGLGNTRFKSSVNRTPRQKTNGTPGDKRELLLELMLLADVGMLGMPNAGKSTFIRAVSAAKPKVADYPFTTLVPSLGVVRMDNEKSFVVADIPGLIEGAAEGAGLGIRFLKHLERCRVLLHLIDIDPIDGTDPVENARIIISELEKYSQDLAAKPRWLVFNKIDLLDKVEAEEKAKAIAEALGWEDKYYLISAASGLGVKDLCWDVMTFIIENPVVQAEEAKQPEKVEFMWDDYHRQQLEEIAEEDDEDWDDDWDEDDEEGVEFIYKR.

One can recognise an Obg domain in the interval 1 to 159 (MKFVDEASIL…RELLLELMLL (159 aa)). Residues 127–147 (NTRFKSSVNRTPRQKTNGTPG) are disordered. Positions 129–145 (RFKSSVNRTPRQKTNGT) are enriched in polar residues. One can recognise an OBG-type G domain in the interval 160-333 (ADVGMLGMPN…LCWDVMTFII (174 aa)). Residues 166–173 (GMPNAGKS), 191–195 (FTTLV), 213–216 (DIPG), 283–286 (NKID), and 314–316 (SAA) each bind GTP. Residues serine 173 and threonine 193 each contribute to the Mg(2+) site.

This sequence belongs to the TRAFAC class OBG-HflX-like GTPase superfamily. OBG GTPase family. As to quaternary structure, monomer. It depends on Mg(2+) as a cofactor.

It is found in the cytoplasm. Functionally, an essential GTPase which binds GTP, GDP and possibly (p)ppGpp with moderate affinity, with high nucleotide exchange rates and a fairly low GTP hydrolysis rate. Plays a role in control of the cell cycle, stress response, ribosome biogenesis and in those bacteria that undergo differentiation, in morphogenesis control. This Escherichia coli O157:H7 protein is GTPase Obg.